The following is a 438-amino-acid chain: Serine hydroxymethyltransferase 1 (438 aa).

Residues Leu130 and 134 to 136 contribute to the (6S)-5,6,7,8-tetrahydrofolate site; that span reads GHL. Position 239 is an N6-(pyridoxal phosphate)lysine (Lys239).

Belongs to the SHMT family. As to quaternary structure, homodimer. Pyridoxal 5'-phosphate serves as cofactor.

Its subcellular location is the cytoplasm. It carries out the reaction (6R)-5,10-methylene-5,6,7,8-tetrahydrofolate + glycine + H2O = (6S)-5,6,7,8-tetrahydrofolate + L-serine. The protein operates within one-carbon metabolism; tetrahydrofolate interconversion. It functions in the pathway amino-acid biosynthesis; glycine biosynthesis; glycine from L-serine: step 1/1. Its function is as follows. Catalyzes the reversible interconversion of serine and glycine with tetrahydrofolate (THF) serving as the one-carbon carrier. This reaction serves as the major source of one-carbon groups required for the biosynthesis of purines, thymidylate, methionine, and other important biomolecules. Also exhibits THF-independent aldolase activity toward beta-hydroxyamino acids, producing glycine and aldehydes, via a retro-aldol mechanism. Thus, is able to catalyze the cleavage of L-allo-threonine. In Mycobacterium tuberculosis (strain ATCC 25618 / H37Rv), this protein is Serine hydroxymethyltransferase 1.